The sequence spans 137 residues: Global transcriptional regulator Spx (137 aa).

An intrachain disulfide couples Cys10 to Cys13.

Belongs to the ArsC family. Spx subfamily. As to quaternary structure, interacts with the C-terminal domain of the alpha subunit of the RNAP.

The protein resides in the cytoplasm. Functionally, global transcriptional regulator that plays a key role in stress response and exerts either positive or negative regulation of genes. Acts by interacting with the C-terminal domain of the alpha subunit of the RNA polymerase (RNAP). This interaction can enhance binding of RNAP to the promoter region of target genes and stimulate their transcription, or block interaction of RNAP with activator. This Streptococcus mutans serotype c (strain ATCC 700610 / UA159) protein is Global transcriptional regulator Spx.